Reading from the N-terminus, the 255-residue chain is Pyrroloquinoline-quinone synthase (255 aa).

It belongs to the PqqC family.

The enzyme catalyses 6-(2-amino-2-carboxyethyl)-7,8-dioxo-1,2,3,4,7,8-hexahydroquinoline-2,4-dicarboxylate + 3 O2 = pyrroloquinoline quinone + 2 H2O2 + 2 H2O + H(+). It participates in cofactor biosynthesis; pyrroloquinoline quinone biosynthesis. In terms of biological role, ring cyclization and eight-electron oxidation of 3a-(2-amino-2-carboxyethyl)-4,5-dioxo-4,5,6,7,8,9-hexahydroquinoline-7,9-dicarboxylic-acid to PQQ. This is Pyrroloquinoline-quinone synthase from Cereibacter sphaeroides (strain ATCC 17029 / ATH 2.4.9) (Rhodobacter sphaeroides).